A 523-amino-acid polypeptide reads, in one-letter code: Cytokinin dehydrogenase 3 (523 aa).

The first 31 residues, 1 to 31 (MASYNLRSQVRLIAITIVIIITLSTPITTNT), serve as a signal peptide directing secretion. In terms of domain architecture, FAD-binding PCMH-type spans 66 to 243 (TKIFPSAVLI…TRARIKLEVA (178 aa)). Positions 100, 102, and 104 each coordinate FAD. His-105 bears the Pros-8alpha-FAD histidine mark. 2 residues coordinate FAD: Ser-106 and Gln-110. N-linked (GlcNAc...) asparagine glycosylation occurs at Asn-153. Asp-167, Thr-172, Ser-178, Ile-182, and Ile-233 together coordinate FAD. The N-linked (GlcNAc...) asparagine glycan is linked to Asn-408. Tyr-476, Ser-511, and Gln-514 together coordinate FAD.

Belongs to the oxygen-dependent FAD-linked oxidoreductase family. FAD is required as a cofactor. Very weak expression in the young shoot tissues around two weeks after germination. Present in the center of the floral meristem and the boundary between long stamen primordia and gynoecial primordia.

The protein resides in the endoplasmic reticulum. Its subcellular location is the vacuole. The catalysed reaction is N(6)-dimethylallyladenine + A + H2O = 3-methyl-2-butenal + adenine + AH2. In terms of biological role, catalyzes the oxidation of cytokinins, a family of N(6)-substituted adenine derivatives that are plant hormones, where the substituent is an isopentenyl group. Catalyzes in vitro the oxidation of various types of cytokinin nucleotides that are known as direct products of cytokinin biosynthesis. In association with CKX5 regulates the activity of the reproductive meristems, flower organ size and ovule formation. This chain is Cytokinin dehydrogenase 3 (CKX3), found in Arabidopsis thaliana (Mouse-ear cress).